We begin with the raw amino-acid sequence, 268 residues long: Riboflavin transport system permease protein RibX (268 aa).

6 consecutive transmembrane segments (helical) span residues 24-44 (ALGLPVTLMLLLVFWQAGVTL), 76-96 (LATLSAALGGFTLALIIALIL), 119-139 (AIPVVAVAPLIILWFGAGLTS), 140-160 (KVLVAALITFLPILINTVVAI), 185-205 (VEAPLALPVLFGGVRTGLALA), and 236-256 (LIFVALATLALITLTLYVLAG). Residues 75–255 (TLATLSAALG…LITLTLYVLA (181 aa)) form the ABC transmembrane type-1 domain.

The protein belongs to the binding-protein-dependent transport system permease family. The complex is likely composed of an ATP-binding protein, a transmembrane protein (RibX) and a solute-binding protein (RibY).

The protein resides in the cell membrane. Part of an ABC transporter complex that transports riboflavin into the cell. The protein is Riboflavin transport system permease protein RibX of Chloroflexus aurantiacus (strain ATCC 29366 / DSM 635 / J-10-fl).